We begin with the raw amino-acid sequence, 353 residues long: Nicotinate-nucleotide--dimethylbenzimidazole phosphoribosyltransferase (353 aa).

The active-site Proton acceptor is glutamate 318.

This sequence belongs to the CobT family.

The enzyme catalyses 5,6-dimethylbenzimidazole + nicotinate beta-D-ribonucleotide = alpha-ribazole 5'-phosphate + nicotinate + H(+). Its pathway is nucleoside biosynthesis; alpha-ribazole biosynthesis; alpha-ribazole from 5,6-dimethylbenzimidazole: step 1/2. Its function is as follows. Catalyzes the synthesis of alpha-ribazole-5'-phosphate from nicotinate mononucleotide (NAMN) and 5,6-dimethylbenzimidazole (DMB). The polypeptide is Nicotinate-nucleotide--dimethylbenzimidazole phosphoribosyltransferase (Desulforudis audaxviator (strain MP104C)).